The following is a 424-amino-acid chain: Adenylosuccinate synthetase (424 aa).

GTP contacts are provided by residues glycine 12 to lysine 18 and glycine 40 to threonine 42. The active-site Proton acceptor is aspartate 13. Residues aspartate 13 and glycine 40 each contribute to the Mg(2+) site. Residues aspartate 13 to lysine 16, asparagine 38 to histidine 41, threonine 130, arginine 144, asparagine 220, threonine 235, and arginine 299 each bind IMP. Residue histidine 41 is the Proton donor of the active site. A substrate-binding site is contributed by valine 295–arginine 301. GTP contacts are provided by residues arginine 301, lysine 327–aspartate 329, and glycine 412–glycine 414.

Belongs to the adenylosuccinate synthetase family. In terms of assembly, homodimer. The cofactor is Mg(2+).

The protein resides in the cytoplasm. It catalyses the reaction IMP + L-aspartate + GTP = N(6)-(1,2-dicarboxyethyl)-AMP + GDP + phosphate + 2 H(+). It functions in the pathway purine metabolism; AMP biosynthesis via de novo pathway; AMP from IMP: step 1/2. Its function is as follows. Plays an important role in the de novo pathway and in the salvage pathway of purine nucleotide biosynthesis. Catalyzes the first committed step in the biosynthesis of AMP from IMP. The chain is Adenylosuccinate synthetase from Neosartorya fischeri (strain ATCC 1020 / DSM 3700 / CBS 544.65 / FGSC A1164 / JCM 1740 / NRRL 181 / WB 181) (Aspergillus fischerianus).